Here is a 153-residue protein sequence, read N- to C-terminus: 3-hydroxyacyl-[acyl-carrier-protein] dehydratase FabZ (153 aa).

His-54 is an active-site residue.

This sequence belongs to the thioester dehydratase family. FabZ subfamily.

It is found in the cytoplasm. It carries out the reaction a (3R)-hydroxyacyl-[ACP] = a (2E)-enoyl-[ACP] + H2O. Functionally, involved in unsaturated fatty acids biosynthesis. Catalyzes the dehydration of short chain beta-hydroxyacyl-ACPs and long chain saturated and unsaturated beta-hydroxyacyl-ACPs. The chain is 3-hydroxyacyl-[acyl-carrier-protein] dehydratase FabZ from Shewanella denitrificans (strain OS217 / ATCC BAA-1090 / DSM 15013).